Here is a 205-residue protein sequence, read N- to C-terminus: Holliday junction branch migration complex subunit RuvA (205 aa).

The domain I stretch occupies residues Met-1–Arg-64. The interval Ser-65–Ile-143 is domain II. The segment at Arg-144–Arg-152 is flexible linker. The domain III stretch occupies residues Thr-153–Arg-205.

This sequence belongs to the RuvA family. In terms of assembly, homotetramer. Forms an RuvA(8)-RuvB(12)-Holliday junction (HJ) complex. HJ DNA is sandwiched between 2 RuvA tetramers; dsDNA enters through RuvA and exits via RuvB. An RuvB hexamer assembles on each DNA strand where it exits the tetramer. Each RuvB hexamer is contacted by two RuvA subunits (via domain III) on 2 adjacent RuvB subunits; this complex drives branch migration. In the full resolvosome a probable DNA-RuvA(4)-RuvB(12)-RuvC(2) complex forms which resolves the HJ.

It is found in the cytoplasm. Functionally, the RuvA-RuvB-RuvC complex processes Holliday junction (HJ) DNA during genetic recombination and DNA repair, while the RuvA-RuvB complex plays an important role in the rescue of blocked DNA replication forks via replication fork reversal (RFR). RuvA specifically binds to HJ cruciform DNA, conferring on it an open structure. The RuvB hexamer acts as an ATP-dependent pump, pulling dsDNA into and through the RuvAB complex. HJ branch migration allows RuvC to scan DNA until it finds its consensus sequence, where it cleaves and resolves the cruciform DNA. This Methylobacterium nodulans (strain LMG 21967 / CNCM I-2342 / ORS 2060) protein is Holliday junction branch migration complex subunit RuvA.